A 277-amino-acid polypeptide reads, in one-letter code: Phosphate import ATP-binding protein PstB 1 (277 aa).

The ABC transporter domain occupies 27 to 272 (LRVRDLAVSY…PSHELTAAYI (246 aa)). ATP is bound at residue 59 to 66 (GPSGCGKT).

It belongs to the ABC transporter superfamily. Phosphate importer (TC 3.A.1.7) family. The complex is composed of two ATP-binding proteins (PstB), two transmembrane proteins (PstC and PstA) and a solute-binding protein (PstS).

Its subcellular location is the cell inner membrane. It carries out the reaction phosphate(out) + ATP + H2O = ADP + 2 phosphate(in) + H(+). Functionally, part of the ABC transporter complex PstSACB involved in phosphate import. Responsible for energy coupling to the transport system. The protein is Phosphate import ATP-binding protein PstB 1 of Nitrosococcus oceani (strain ATCC 19707 / BCRC 17464 / JCM 30415 / NCIMB 11848 / C-107).